Reading from the N-terminus, the 232-residue chain is U-scoloptoxin(11)-Sa3a (232 aa).

A signal peptide spans 1-21 (MFQFCLLILLLAPGRFFSALG).

The protein belongs to the scoloptoxin-11 family. Post-translationally, contains 8 disulfide bonds. In terms of tissue distribution, expressed by the venom gland.

It is found in the secreted. In Scolopendra alternans (Florida Keys giant centipede), this protein is U-scoloptoxin(11)-Sa3a.